Reading from the N-terminus, the 145-residue chain is Protein SPMIP3 (145 aa).

The sequence is that of Protein SPMIP3 from Mus musculus (Mouse).